The sequence spans 120 residues: uncharacterized protein (120 aa).

The RING-type zinc-finger motif lies at 70–109 (CARCRRSLTLTPAVSCLPCGHSCLCTDCDQLFANVCFECK).

This is an uncharacterized protein from Orgyia pseudotsugata multicapsid polyhedrosis virus (OpMNPV).